The following is a 399-amino-acid chain: Acetylornithine aminotransferase (399 aa).

Pyridoxal 5'-phosphate-binding positions include 102–103 and Phe138; that span reads GA. Position 141 (Arg141) interacts with N(2)-acetyl-L-ornithine. 223–226 provides a ligand contact to pyridoxal 5'-phosphate; the sequence is DEVQ. Lys252 is modified (N6-(pyridoxal phosphate)lysine). Thr280 contacts pyridoxal 5'-phosphate.

The protein belongs to the class-III pyridoxal-phosphate-dependent aminotransferase family. ArgD subfamily. In terms of assembly, homodimer. It depends on pyridoxal 5'-phosphate as a cofactor.

It is found in the cytoplasm. The catalysed reaction is N(2)-acetyl-L-ornithine + 2-oxoglutarate = N-acetyl-L-glutamate 5-semialdehyde + L-glutamate. It functions in the pathway amino-acid biosynthesis; L-arginine biosynthesis; N(2)-acetyl-L-ornithine from L-glutamate: step 4/4. This chain is Acetylornithine aminotransferase, found in Ralstonia nicotianae (strain ATCC BAA-1114 / GMI1000) (Ralstonia solanacearum).